Consider the following 70-residue polypeptide: MNLIAAAIAIGLGALGAGIGNGLIVSKTVEGIARQPEAGRELRTLMFIGVALVEALPIIAVVIAFLAFFG.

Helical transmembrane passes span 4-24 and 45-65; these read IAAA…NGLI and LMFI…VIAF.

This sequence belongs to the ATPase C chain family. As to quaternary structure, F-type ATPases have 2 components, F(1) - the catalytic core - and F(0) - the membrane proton channel. F(1) has five subunits: alpha(3), beta(3), gamma(1), delta(1), epsilon(1). F(0) has three main subunits: a(1), b(2) and c(10-14). The alpha and beta chains form an alternating ring which encloses part of the gamma chain. F(1) is attached to F(0) by a central stalk formed by the gamma and epsilon chains, while a peripheral stalk is formed by the delta and b chains.

Its subcellular location is the cell membrane. Its function is as follows. F(1)F(0) ATP synthase produces ATP from ADP in the presence of a proton or sodium gradient. F-type ATPases consist of two structural domains, F(1) containing the extramembraneous catalytic core and F(0) containing the membrane proton channel, linked together by a central stalk and a peripheral stalk. During catalysis, ATP synthesis in the catalytic domain of F(1) is coupled via a rotary mechanism of the central stalk subunits to proton translocation. This is ATP synthase subunit c from Bacillus pumilus (strain SAFR-032).